We begin with the raw amino-acid sequence, 1170 residues long: Disease resistance protein LAZ5 (1170 aa).

Residues 10–172 (ESWQVFINFR…KIIDSIKKVL (163 aa)) form the TIR domain. Residue glutamate 84 is part of the active site. Residues 193 to 219 (EAKNVDTFSPNSSDFPSTSIDDDLSIN) form a disordered region. Polar residues predominate over residues 198-219 (DTFSPNSSDFPSTSIDDDLSIN). Residues 261 to 513 (RLKEMEEKLD…DVACFFKSEN (253 aa)) enclose the NB-ARC domain. 12 LRR repeats span residues 595–616 (MENV…TFDG), 622–645 (MCNL…IFKF), 646–670 (DTVR…PWEK), 677–700 (PENL…VKDT), 723–747 (AKNL…MENM), 761–785 (LTCL…KLEE), 790–813 (SENL…AGDL), 815–837 (RLVV…LGKQ), 838–861 (KALQ…VKDM), 862–885 (KHLR…SLKC), 888–904 (LSRN…LKDF), and 905–930 (SNLK…CLEY).

The enzyme catalyses NAD(+) + H2O = ADP-D-ribose + nicotinamide + H(+). In terms of biological role, TIR-NB-LRR receptor-like protein that may play a role in plant innate immunity. May trigger hypersensitive programmed cell death in response to pathogen attack. Involved in tolerance to tobacco ringspot virus (TRSV). In Arabidopsis thaliana (Mouse-ear cress), this protein is Disease resistance protein LAZ5.